Here is a 117-residue protein sequence, read N- to C-terminus: Membrane-anchored ubiquitin-fold protein 1 (117 aa).

The 67-residue stretch at 8-74 (LEIKFRLTDG…LENSKTVKDY (67 aa)) folds into the Ubiquitin-like domain. C112 carries S-palmitoyl cysteine lipidation. A Cysteine methyl ester modification is found at C114. C114 carries the S-farnesyl cysteine lipid modification. Positions 115-117 (SVM) are cleaved as a propeptide — removed in mature form.

The protein localises to the cell membrane. Functionally, may serve as docking site to facilitate the association of other proteins to the plasma membrane. This Arabidopsis thaliana (Mouse-ear cress) protein is Membrane-anchored ubiquitin-fold protein 1 (MUB1).